The sequence spans 155 residues: UPF0735 ACT domain-containing protein CA_C1234 (155 aa).

The ACT domain occupies 79–154; the sequence is TISILIEHRR…NVLKVEIVAM (76 aa).

The protein belongs to the UPF0735 family.

This is UPF0735 ACT domain-containing protein CA_C1234 from Clostridium acetobutylicum (strain ATCC 824 / DSM 792 / JCM 1419 / IAM 19013 / LMG 5710 / NBRC 13948 / NRRL B-527 / VKM B-1787 / 2291 / W).